Consider the following 206-residue polypeptide: mRNA-decapping protein D9 (206 aa).

Positions 23–206 (KKTHVFAICV…FIYNTLLYSK (184 aa)) constitute a Nudix hydrolase domain. The short motif at 104–125 (GKLNKSETIDDCIRREIKEETD) is the Nudix box element. A Mg(2+)-binding site is contributed by Glu-110. The active-site Nucleophile is Glu-119. Residues Glu-123 and Asp-144 each coordinate Mg(2+).

The protein belongs to the Nudix hydrolase family. Mg(2+) is required as a cofactor. The cofactor is Mn(2+).

Decapping enzyme required for the removal of the 5'-end m7GpppN cap tethered to viral and host mRNAs to allow their decay in cells. May therefore accelerate viral and cellular mRNA turnover to eliminate competing host mRNAs and allow stage-specific synthesis of viral proteins. Acceleration of the turnover of cellular transcripts may even promote the shutoff of host protein synthesis. Does not cleave unmethylated RNAs or RNAs shorter than 24 nucleotides. The polypeptide is mRNA-decapping protein D9 (Oryctolagus cuniculus (Rabbit)).